A 121-amino-acid polypeptide reads, in one-letter code: Small ribosomal subunit protein uS13 (121 aa).

The tract at residues 91–121 is disordered; the sequence is HRRGLPVRGQNTKNNARTRKGPSKTVAGKKK. Basic residues predominate over residues 106-121; sequence ARTRKGPSKTVAGKKK.

This sequence belongs to the universal ribosomal protein uS13 family. Part of the 30S ribosomal subunit. Forms a loose heterodimer with protein S19. Forms two bridges to the 50S subunit in the 70S ribosome.

In terms of biological role, located at the top of the head of the 30S subunit, it contacts several helices of the 16S rRNA. In the 70S ribosome it contacts the 23S rRNA (bridge B1a) and protein L5 of the 50S subunit (bridge B1b), connecting the 2 subunits; these bridges are implicated in subunit movement. Contacts the tRNAs in the A and P-sites. The chain is Small ribosomal subunit protein uS13 from Listeria monocytogenes serotype 4b (strain CLIP80459).